Here is a 305-residue protein sequence, read N- to C-terminus: Uridylate-specific endoribonuclease D (305 aa).

The N-terminal stretch at 1–17 (MKVYFVFLCLLPSLISG) is a signal peptide. The 273-residue stretch at 33–305 (SNAEIQSLAE…RYVASSYPNI (273 aa)) folds into the EndoU domain. Residues His-182, His-197, and Lys-240 contribute to the active site. Asn-288 carries N-linked (GlcNAc...) asparagine glycosylation.

It belongs to the ENDOU family. Monomer. Requires Mn(2+) as cofactor.

It localises to the secreted. It carries out the reaction ribonucleotidyl-uridine-RNA = a 5'-end dephospho-uridine-RNA + a 3'-end 2',3'-cyclophospho-ribonucleotide-RNA. In terms of biological role, endoribonuclease that cleaves single-stranded RNAs at 5' of uridylates and releases a product with a 2',3'-cyclic phosphate at the 3'-end. The protein is Uridylate-specific endoribonuclease D (endou-d) of Xenopus laevis (African clawed frog).